Here is a 172-residue protein sequence, read N- to C-terminus: Translationally-controlled tumor protein homolog (172 aa).

The TCTP domain maps to 1–172 (MIIYRDCISQ…FKDGLEIEKC (172 aa)). At Ser-46 the chain carries Phosphoserine; by PLK1.

Belongs to the TCTP family.

It is found in the cytoplasm. Functionally, involved in calcium binding and microtubule stabilization. This chain is Translationally-controlled tumor protein homolog (TPT1), found in Gallus gallus (Chicken).